The sequence spans 1102 residues: Endocytosis protein end4 (1102 aa).

Positions 9–139 (DHMQSDASLM…SFHAQHPEFN (131 aa)) constitute an ENTH domain. The interval 265–334 (PHDPPDLEGD…SEPEPIQDFW (70 aa)) is disordered. Residues 292–305 (TGASTIAPQPTGTS) are compositionally biased toward polar residues. Positions 338-661 (TLDQQLAAQQ…ESLLQLSKLQ (324 aa)) form a coiled coil. The I/LWEQ domain occupies 858-1100 (LLNAPGENIE…DMRKTSYHVA (243 aa)).

The protein belongs to the SLA2 family.

The protein resides in the cytoplasm. It is found in the cytoskeleton. Functionally, required for cellular morphogenesis and polarization of the cortical cytoskeleton. Required for establishment of new polarized growth zones where it acts in actin organization. Involved plasma membrane internalization and is essential for fluid-phase endocytosis. In Schizosaccharomyces pombe (strain 972 / ATCC 24843) (Fission yeast), this protein is Endocytosis protein end4 (end4).